Reading from the N-terminus, the 78-residue chain is NEDD8-like protein RUB3 (78 aa).

Residue Gly76 forms a Glycyl lysine isopeptide (Gly-Lys) (interchain with K-? in acceptor proteins) linkage. Positions 77–78 (CC) are excised as a propeptide.

As to expression, detected in stems and flower buds, but not in leaves, mature flowers and seedlings.

In terms of biological role, may function as a stable post-translational protein modifier. This is NEDD8-like protein RUB3 (RUB3) from Arabidopsis thaliana (Mouse-ear cress).